The primary structure comprises 504 residues: ADP,ATP carrier protein 3 (504 aa).

12 helical membrane passes run leucine 23–leucine 43, isoleucine 59–tyrosine 79, tyrosine 90–isoleucine 110, tyrosine 146–tryptophan 166, proline 183–phenylalanine 203, glutamate 230–phenylalanine 250, isoleucine 296–alanine 316, valine 329–isoleucine 349, leucine 364–isoleucine 384, glutamate 386–isoleucine 406, phenylalanine 449–threonine 469, and isoleucine 473–valine 493.

Belongs to the ADP/ATP translocase tlc family.

The protein resides in the cell membrane. Provides the rickettsial cell with host ATP in exchange for rickettsial ADP. This is an obligate exchange system. This energy acquiring activity is an important component of rickettsial parasitism. This Rickettsia bellii (strain RML369-C) protein is ADP,ATP carrier protein 3 (tlcC).